Consider the following 344-residue polypeptide: Beta-hexosaminidase (344 aa).

Substrate is bound by residues Asp60, Arg68, Arg132, and 162-163; that span reads KH. Residue His175 is the Proton donor/acceptor of the active site. Asp247 serves as the catalytic Nucleophile.

Belongs to the glycosyl hydrolase 3 family. NagZ subfamily.

It localises to the cytoplasm. The enzyme catalyses Hydrolysis of terminal non-reducing N-acetyl-D-hexosamine residues in N-acetyl-beta-D-hexosaminides.. It participates in cell wall biogenesis; peptidoglycan recycling. Plays a role in peptidoglycan recycling by cleaving the terminal beta-1,4-linked N-acetylglucosamine (GlcNAc) from peptide-linked peptidoglycan fragments, giving rise to free GlcNAc, anhydro-N-acetylmuramic acid and anhydro-N-acetylmuramic acid-linked peptides. The chain is Beta-hexosaminidase from Haemophilus ducreyi (strain 35000HP / ATCC 700724).